We begin with the raw amino-acid sequence, 378 residues long: Enoyl-[acyl-carrier-protein] reductase 1, mitochondrial (378 aa).

Catalysis depends on tyrosine 59, which acts as the Proton donor. NADP(+) contacts are provided by residues asparagine 151, asparagine 180–valine 183, arginine 203–lysine 206, tyrosine 284–methionine 287, tyrosine 309–leucine 311, and lysine 372.

The protein belongs to the zinc-containing alcohol dehydrogenase family. Quinone oxidoreductase subfamily. As to quaternary structure, homodimer.

It localises to the mitochondrion matrix. It carries out the reaction a 2,3-saturated acyl-[ACP] + NADP(+) = a (2E)-enoyl-[ACP] + NADPH + H(+). Functionally, catalyzes the NADPH-dependent reduction of trans-2-enoyl thioesters in mitochondrial fatty acid synthesis (fatty acid synthesis type II). Fatty acid chain elongation in mitochondria uses acyl carrier protein (ACP) as an acyl group carrier, but the enzyme accepts both ACP and CoA thioesters as substrates in vitro. Required for respiration and the maintenance of the mitochondrial compartment. This chain is Enoyl-[acyl-carrier-protein] reductase 1, mitochondrial (ETR1), found in Debaryomyces hansenii (strain ATCC 36239 / CBS 767 / BCRC 21394 / JCM 1990 / NBRC 0083 / IGC 2968) (Yeast).